The chain runs to 464 residues: Protein FAM90A20 (464 aa).

Disordered regions lie at residues 16-42 (RAQTLQKQRRAPVGPRAPPPDEEDPRL), 71-213 (ATLG…IPRP), 228-247 (PTHSSPEGSCREVPQAASKT), 254-273 (VRTQAQDKRPAVTSQPCPSA), 309-389 (RLGP…HDGA), and 418-437 (EKPGAFLAQSPHVSEKSEAP). 2 stretches are compositionally biased toward basic and acidic residues: residues 74–83 (GKKEGKENLK) and 97–114 (NKDKGEKEERPRQQDPQR). Over residues 180-197 (LASLSPLRKASLSSSSSL) the composition is skewed to low complexity.

This sequence belongs to the FAM90 family.

The sequence is that of Protein FAM90A20 from Homo sapiens (Human).